Consider the following 343-residue polypeptide: Sodium/bile acid cotransporter 7-B (343 aa).

Residues 1–9 (MGLLERLRK) lie on the Cytoplasmic side of the membrane. A helical transmembrane segment spans residues 10–30 (EWFIIGIILVIVAAKLEPTIG). Residues 31–37 (EKGGPLK) lie on the Extracellular side of the membrane. The helical transmembrane segment at 38 to 58 (PEITITYIAVSAIFFNSGLSL) threads the bilayer. Over 59–71 (KTEELTNALMHVK) the chain is Cytoplasmic. The helical transmembrane segment at 72-92 (LHLFVQLFTLVFFPTAIWIFL) threads the bilayer. At 93 to 116 (QVLSLTPINEWLLKGLQTVSCMPP) the chain is on the extracellular side. The chain crosses the membrane as a helical span at residues 117–137 (PVSSAVILTKAVGGNEAAAIF). Position 138 (Asn138) is a topological domain, cytoplasmic. Residues 139 to 159 (SAFGSFLGIVVTPLLLLLFLG) form a helical membrane-spanning segment. At 160–163 (SSSS) the chain is on the extracellular side. Residues 164 to 184 (VPFTSIFSQLFMTVVVPLIIG) form a helical membrane-spanning segment. Residues 185-201 (QIVRRYIKDWLERKKPP) are Cytoplasmic-facing. A helical membrane pass occupies residues 202 to 222 (FGAISSCVLLMIIYTTFCDTF). Residues 223 to 234 (SNPNIDLDTFSL) are Extracellular-facing. A helical transmembrane segment spans residues 235–255 (VVIVFIIFFIQLAFMLLTFLF). Topologically, residues 256–270 (STSKNSGFTPADTVA) are cytoplasmic. A helical transmembrane segment spans residues 271-291 (IVFCSTHKSLTLGIPMLKIVF). Residues 292 to 298 (AGYEHLS) are Extracellular-facing. A helical membrane pass occupies residues 299 to 319 (LISVPLLIYHPAQILLGSVLV). The Cytoplasmic segment spans residues 320–343 (PTIKSWMLSRRKALKLTRQPKIPL).

The protein belongs to the bile acid:sodium symporter (BASS) (TC 2.A.28) family.

Its subcellular location is the cell membrane. It localises to the endoplasmic reticulum membrane. The protein resides in the golgi apparatus membrane. Functionally, involved in teeth and skeletal development. Has an essential role in the biosynthesis and trafficking of glycosaminoglycans and glycoproteins to produce a proper functioning extracellular matrix. Required for extracellular matrix mineralization. Also involved in the regulation of cellular calcium homeostasis. Does not show transport activity towards bile acids or steroid sulfates. The chain is Sodium/bile acid cotransporter 7-B (slc10a7-b) from Xenopus laevis (African clawed frog).